A 20-amino-acid chain; its full sequence is Fibrinogen beta chain (20 aa).

Residues 1–12 are compositionally biased toward acidic residues; sequence IIDYYDEGEEDR. The disordered stretch occupies residues 1–20; it reads IIDYYDEGEEDRDVGVVDAR.

As to quaternary structure, heterohexamer; disulfide linked. Contains 2 sets of 3 non-identical chains (alpha, beta and gamma). The 2 heterotrimers are in head to head conformation with the N-termini in a small central domain. Conversion of fibrinogen to fibrin is triggered by thrombin, which cleaves fibrinopeptides A and B from alpha and beta chains, and thus exposes the N-terminal polymerization sites responsible for the formation of the soft clot.

The protein localises to the secreted. Its function is as follows. Cleaved by the protease thrombin to yield monomers which, together with fibrinogen alpha (FGA) and fibrinogen gamma (FGG), polymerize to form an insoluble fibrin matrix. Fibrin has a major function in hemostasis as one of the primary components of blood clots. In addition, functions during the early stages of wound repair to stabilize the lesion and guide cell migration during re-epithelialization. Was originally thought to be essential for platelet aggregation, based on in vitro studies using anticoagulated blood. However subsequent studies have shown that it is not absolutely required for thrombus formation in vivo. Enhances expression of SELP in activated platelets. Maternal fibrinogen is essential for successful pregnancy. Fibrin deposition is also associated with infection, where it protects against IFNG-mediated hemorrhage. May also facilitate the antibacterial immune response via both innate and T-cell mediated pathways. This is Fibrinogen beta chain (FGB) from Felis catus (Cat).